The sequence spans 123 residues: Aspartate 1-decarboxylase (123 aa).

Residue serine 25 is the Schiff-base intermediate with substrate; via pyruvic acid of the active site. At serine 25 the chain carries Pyruvic acid (Ser). Threonine 57 lines the substrate pocket. The active-site Proton donor is the tyrosine 58. 73–75 contacts substrate; sequence GAA.

Belongs to the PanD family. As to quaternary structure, heterooctamer of four alpha and four beta subunits. The cofactor is pyruvate. Is synthesized initially as an inactive proenzyme, which is activated by self-cleavage at a specific serine bond to produce a beta-subunit with a hydroxyl group at its C-terminus and an alpha-subunit with a pyruvoyl group at its N-terminus.

It is found in the cytoplasm. The enzyme catalyses L-aspartate + H(+) = beta-alanine + CO2. It functions in the pathway cofactor biosynthesis; (R)-pantothenate biosynthesis; beta-alanine from L-aspartate: step 1/1. Catalyzes the pyruvoyl-dependent decarboxylation of aspartate to produce beta-alanine. The sequence is that of Aspartate 1-decarboxylase from Clostridium novyi (strain NT).